Here is a 1063-residue protein sequence, read N- to C-terminus: Alkane uptake protein B (1063 aa).

Positions 1–17 (MKYNKTLALIPAILLAA) are cleaved as a signal peptide. Cys18 carries the N-palmitoyl cysteine lipid modification. Residue Cys18 is the site of S-diacylglycerol cysteine attachment.

As to quaternary structure, interacts with the outer membrane protein AupA.

The protein resides in the cell inner membrane. Required for growth on alkanes. Probably involved in the uptake of micelle-solubilized alkanes. May facilitate the transfer of alkanes from the outer membrane to the inner membrane. The sequence is that of Alkane uptake protein B from Marinobacter nauticus (strain ATCC 49840 / DSM 8798 / CIP 103578 / SP17) (Marinobacter hydrocarbonoclasticus).